The sequence spans 161 residues: Peptidyl-prolyl cis-trans isomerase-like 3 (161 aa).

An N-acetylserine modification is found at Ser2. A PPIase cyclophilin-type domain is found at 2–154 (SVTLHTDVGD…NDVHIKDITI (153 aa)). Arg61 is subject to Omega-N-methylarginine.

Belongs to the cyclophilin-type PPIase family. PPIL3 subfamily. Identified in the spliceosome C complex. As to expression, ubiquitous. Detected at low levels.

It carries out the reaction [protein]-peptidylproline (omega=180) = [protein]-peptidylproline (omega=0). Functionally, PPIases accelerate the folding of proteins. It catalyzes the cis-trans isomerization of proline imidic peptide bonds in oligopeptides. May be involved in pre-mRNA splicing. This is Peptidyl-prolyl cis-trans isomerase-like 3 (PPIL3) from Homo sapiens (Human).